The chain runs to 252 residues: 5'-nucleotidase SurE (252 aa).

Positions 8, 9, 39, and 91 each coordinate a divalent metal cation.

This sequence belongs to the SurE nucleotidase family. The cofactor is a divalent metal cation.

The protein localises to the cytoplasm. It catalyses the reaction a ribonucleoside 5'-phosphate + H2O = a ribonucleoside + phosphate. Its function is as follows. Nucleotidase that shows phosphatase activity on nucleoside 5'-monophosphates. The sequence is that of 5'-nucleotidase SurE from Legionella pneumophila (strain Corby).